Consider the following 206-residue polypeptide: Small ribosomal subunit protein uS4 (206 aa).

In terms of domain architecture, S4 RNA-binding spans 96–158 (SRLDNVVYRM…AKKQLRIQNA (63 aa)).

Belongs to the universal ribosomal protein uS4 family. Part of the 30S ribosomal subunit. Contacts protein S5. The interaction surface between S4 and S5 is involved in control of translational fidelity.

Functionally, one of the primary rRNA binding proteins, it binds directly to 16S rRNA where it nucleates assembly of the body of the 30S subunit. In terms of biological role, with S5 and S12 plays an important role in translational accuracy. This Francisella tularensis subsp. holarctica (strain OSU18) protein is Small ribosomal subunit protein uS4.